We begin with the raw amino-acid sequence, 195 residues long: Orotate phosphoribosyltransferase (195 aa).

Position 117-125 (117-125 (EDITTTGGS)) interacts with 5-phospho-alpha-D-ribose 1-diphosphate. Residues threonine 121 and arginine 149 each contribute to the orotate site.

It belongs to the purine/pyrimidine phosphoribosyltransferase family. PyrE subfamily. As to quaternary structure, homodimer. It depends on Mg(2+) as a cofactor.

It catalyses the reaction orotidine 5'-phosphate + diphosphate = orotate + 5-phospho-alpha-D-ribose 1-diphosphate. It participates in pyrimidine metabolism; UMP biosynthesis via de novo pathway; UMP from orotate: step 1/2. In terms of biological role, catalyzes the transfer of a ribosyl phosphate group from 5-phosphoribose 1-diphosphate to orotate, leading to the formation of orotidine monophosphate (OMP). This chain is Orotate phosphoribosyltransferase, found in Acidithiobacillus ferrooxidans (strain ATCC 53993 / BNL-5-31) (Leptospirillum ferrooxidans (ATCC 53993)).